The primary structure comprises 596 residues: Jacalin-related lectin 46 (596 aa).

The disordered stretch occupies residues 1–20 (MTERSEALGKDGNRRWDDKS). 4 Jacalin-type lectin domains span residues 2-143 (TERS…YFTR), 146-291 (PTRI…YFTP), 294-439 (PTKS…HFYP), and 446-592 (AEKL…HVLP).

The protein belongs to the jacalin lectin family.

This is Jacalin-related lectin 46 (JAL46) from Arabidopsis thaliana (Mouse-ear cress).